We begin with the raw amino-acid sequence, 374 residues long: Agmatine deiminase (374 aa).

Residues D220 and D226 each contribute to the agmatine site. The Amidino-cysteine intermediate role is filled by C366.

This sequence belongs to the agmatine deiminase family. In terms of assembly, forms homodimers.

It catalyses the reaction agmatine + H2O = N-carbamoylputrescine + NH4(+). Its pathway is amine and polyamine biosynthesis; putrescine biosynthesis via agmatine pathway; N-carbamoylputrescine from agmatine: step 1/1. In terms of biological role, mediates the hydrolysis of agmatine into N-carbamoylputrescine in the arginine decarboxylase (ADC) pathway of putrescine biosynthesis, a basic polyamine. This Medicago truncatula (Barrel medic) protein is Agmatine deiminase.